Consider the following 361-residue polypeptide: DNA polymerase subunit gamma-2, mitochondrial (361 aa).

The N-terminal 18 residues, 1-18, are a transit peptide targeting the mitochondrion; the sequence is MSRIQRCFKSLASAGFFR.

In terms of assembly, component of the DNA polymerase gamma complex consisting of two subunits: the catalytic subunit DNApol-gamma/DNApolG1 and the accessory subunit PolG2/DNApol-gamma35. As to expression, expressed in ovaries (at protein level).

Its subcellular location is the mitochondrion. As accessory component of the DNA polymerase gamma complex is involved in the replication of mitochondrial DNA. Does not bind DNA. Essential for mitochondrial DNA maintenance and larval development. In Drosophila melanogaster (Fruit fly), this protein is DNA polymerase subunit gamma-2, mitochondrial.